Here is a 607-residue protein sequence, read N- to C-terminus: SNW/SKI-interacting protein A (607 aa).

5 disordered regions span residues 29-77, 178-205, 217-265, 327-434, and 516-607; these read ERYG…GGAF, AQPKNVPTHDSESKFIKYKPSQQSAAFN, EMAQ…IPPC, LQLK…DRDR, and KVMK…ERGR. Residues 35–49 are compositionally biased toward low complexity; the sequence is SAQSDAAAAAAKPSG. Residues 190-353 are SNW; that stretch reads SKFIKYKPSQ…QKARMERTGA (164 aa). The segment covering 240–251 has biased composition (pro residues); the sequence is PPVPVMHSPPRP. Coiled-coil stretches lie at residues 313 to 349 and 391 to 418; these read AREAVQMRSKVQRELQLKEKERKEQELRALAQKARME and EREARIERDRIREERRRERERERRLEAR. 5 stretches are compositionally biased toward basic and acidic residues: residues 327–339, 379–434, 516–527, 535–550, and 562–571; these read LQLKEKERKEQEL, EQPR…DRDR, KVMKTDRFKPDK, RSGKRDRPVEFDKQEE, and EVKKGKKAVE.

Belongs to the SNW family. In terms of assembly, interacts with FLO6/SIP4. Interacts with DIS1. In terms of tissue distribution, widely expressed.

The protein resides in the nucleus. Its function is as follows. Acts as a positive regulator of drought and salt tolerance. Acts as a positive regulator of cell viability. This is SNW/SKI-interacting protein A from Oryza sativa subsp. japonica (Rice).